Consider the following 544-residue polypeptide: Probable protein kinase UbiB (544 aa).

The region spanning 123–505 (EFDEQALASA…GRQKSHNVRS (383 aa)) is the Protein kinase domain. ATP-binding positions include 129-137 (LASASIAQV) and Lys156. Catalysis depends on Asp291, which acts as the Proton acceptor. Residues 522-540 (LPLWLSCGTLVTVLLVLLL) form a helical membrane-spanning segment.

It belongs to the ABC1 family. UbiB subfamily.

It is found in the cell inner membrane. Its pathway is cofactor biosynthesis; ubiquinone biosynthesis [regulation]. Is probably a protein kinase regulator of UbiI activity which is involved in aerobic coenzyme Q (ubiquinone) biosynthesis. The polypeptide is Probable protein kinase UbiB (Actinobacillus pleuropneumoniae serotype 7 (strain AP76)).